A 121-amino-acid chain; its full sequence is Outer membrane lipoprotein BBA14 (121 aa).

A signal peptide spans 1–19 (MQIKNFPFLFLLNSLIIFS). Cysteine 20 is lipidated: N-palmitoyl cysteine. A lipid anchor (S-diacylglycerol cysteine) is attached at cysteine 20.

The protein resides in the cell outer membrane. Its function is as follows. Outer membrane lipoprotein that could act as a component of a potential toxin-antitoxin system in B.burgdorferi which could serve as a plasmid stabilization mechanism in a growing bacterial population. This Borreliella burgdorferi (strain ATCC 35210 / DSM 4680 / CIP 102532 / B31) (Borrelia burgdorferi) protein is Outer membrane lipoprotein BBA14.